The sequence spans 606 residues: Calmegin (606 aa).

An N-terminal signal peptide occupies residues 1-19; that stretch reads MRFQGFWLCLGLLFISVNA. The Lumenal portion of the chain corresponds to 20-466; the sequence is EFMDDSVEME…QLMSATEQRP (447 aa). Lys-124 bears the N6-acetyllysine mark. Residues Cys-147 and Cys-181 are joined by a disulfide bond. Positions 255 to 308 are disordered; the sequence is PPINPPKEIEDPTDEKPDDWDERAKIPDASAVKPEDWDESEPPQIVDSSAVKPD. Repeat copies occupy residues 263-276, 280-293, 299-312, 318-331, 335-348, 352-365, 366-379, and 380-393. The segment covering 265-275 has biased composition (acidic residues); sequence DPTDEKPDDWD. The tract at residues 313–346 is interaction with PPIB; that stretch reads NEPEFIPDPNAEKPFDWNEDMDGEWEAPHISNPA. Residues Cys-347 and Cys-351 are joined by a disulfide bond. Residues 467 to 487 form a helical membrane-spanning segment; that stretch reads WLWFIYLLTAALPIALIGSFC. Residues 488 to 606 are Cytoplasmic-facing; sequence WPRKVKKKYE…SVRKRRVRKE (119 aa). Residues 518 to 544 are compositionally biased toward basic and acidic residues; sequence EVKEEKAALEKPVDLEEEKKQSDGEIV. The disordered stretch occupies residues 518–606; the sequence is EVKEEKAALE…SVRKRRVRKE (89 aa). The segment covering 545-567 has biased composition (acidic residues); it reads EKEEEGEPEEKSEEEIEIIEGQE. 7 positions are modified to phosphoserine: Ser-556, Ser-572, Ser-575, Ser-577, Ser-587, Ser-590, and Ser-597. A compositionally biased stretch (basic and acidic residues) spans 568 to 579; it reads EGNKSNKSGSED. Residues 597–606 show a composition bias toward basic residues; it reads SVRKRRVRKE.

This sequence belongs to the calreticulin family. As to quaternary structure, interacts with PPIB and PDILT. Interacts with ADAM2.

The protein resides in the endoplasmic reticulum membrane. Functionally, functions during spermatogenesis as a chaperone for a range of client proteins that are important for sperm adhesion onto the egg zona pellucida and for subsequent penetration of the zona pellucida. Required for normal sperm migration from the uterus into the oviduct. Required for normal male fertility. Binds calcium ions. In Bos taurus (Bovine), this protein is Calmegin (CLGN).